We begin with the raw amino-acid sequence, 272 residues long: MSMQEKIMRELHVKPSIDPKQEIEDRVNFLKQYVKKTGAKGFVLGISGGQDSTLAGRLAQLAVESIREEGGDAQFIAVRLPHGTQQDEDDAQLALKFIKPDKSWKFDIKSTVSAFSDQYQQETGDQLTDFNKGNVKARTRMIAQYAIGGQEGLLVLGTDHAAEAVTGFFTKYGDGGADLLPLTGLTKRQGRTLLKELGAPERLYLKEPTADLLDEKPQQSDETELGISYDEIDDYLEGKEVSAKVSEALEKRYSMTEHKRQVPASMFDDWWK.

Tyrosine 33 serves as a coordination point for deamido-NAD(+). Residues 45-52, arginine 79, and glutamine 85 each bind ATP; that span reads GISGGQDS. Aspartate 51 lines the Mg(2+) pocket. Position 138 (arginine 138) interacts with deamido-NAD(+). Residue threonine 158 coordinates ATP. Position 163 (glutamate 163) interacts with Mg(2+). Positions 171 and 178 each coordinate deamido-NAD(+). 2 residues coordinate ATP: lysine 187 and threonine 209. Deamido-NAD(+)-binding positions include glutamate 224 and 258–259; that span reads HK.

Belongs to the NAD synthetase family. As to quaternary structure, homodimer. Post-translationally, phosphorylated during sporulation.

The enzyme catalyses deamido-NAD(+) + NH4(+) + ATP = AMP + diphosphate + NAD(+) + H(+). It functions in the pathway cofactor biosynthesis; NAD(+) biosynthesis; NAD(+) from deamido-NAD(+) (ammonia route): step 1/1. Functionally, catalyzes the ATP-dependent amidation of deamido-NAD to form NAD. Uses ammonia as a nitrogen source. This chain is NH(3)-dependent NAD(+) synthetase, found in Bacillus subtilis (strain 168).